A 504-amino-acid chain; its full sequence is Cobyric acid synthase (504 aa).

The GATase cobBQ-type domain occupies 251-448; that stretch reads DITIAIVQLP…LHGLFDSDAF (198 aa). Cys-332 serves as the catalytic Nucleophile. The active site involves His-440.

Belongs to the CobB/CobQ family. CobQ subfamily.

The protein operates within cofactor biosynthesis; adenosylcobalamin biosynthesis. Its function is as follows. Catalyzes amidations at positions B, D, E, and G on adenosylcobyrinic A,C-diamide. NH(2) groups are provided by glutamine, and one molecule of ATP is hydrogenolyzed for each amidation. This is Cobyric acid synthase from Salmonella gallinarum (strain 287/91 / NCTC 13346).